Reading from the N-terminus, the 169-residue chain is MKLNEIRDNEGATKARMRVGRGIGSGKGKTGGRGVKGQKARSGVSIKGFEGGQMPLHRRLPKRGFNNIHAHDLNEVNLGRVQQAVDAGKLDANAAVTVEALVKAGIISRARDGVKLLGVGELTSKLSFEVTRASKSAIEAVEKAGGSVTTTFAAGVAHRGAAEGAVASA.

Residues 20-56 (GRGIGSGKGKTGGRGVKGQKARSGVSIKGFEGGQMPL) form a disordered region. Positions 21–35 (RGIGSGKGKTGGRGV) are enriched in gly residues.

The protein belongs to the universal ribosomal protein uL15 family. As to quaternary structure, part of the 50S ribosomal subunit.

Its function is as follows. Binds to the 23S rRNA. The sequence is that of Large ribosomal subunit protein uL15 from Methylorubrum extorquens (strain CM4 / NCIMB 13688) (Methylobacterium extorquens).